Consider the following 367-residue polypeptide: Protein RecA (367 aa).

73 to 80 (GPESSGKT) contacts ATP. Residues 345 to 367 (DEPVAKKASAKESKEAKELKEVE) are disordered.

It belongs to the RecA family.

The protein resides in the cytoplasm. Can catalyze the hydrolysis of ATP in the presence of single-stranded DNA, the ATP-dependent uptake of single-stranded DNA by duplex DNA, and the ATP-dependent hybridization of homologous single-stranded DNAs. It interacts with LexA causing its activation and leading to its autocatalytic cleavage. The sequence is that of Protein RecA from Janthinobacterium sp. (strain Marseille) (Minibacterium massiliensis).